Here is a 474-residue protein sequence, read N- to C-terminus: Probable dipeptidase B (474 aa).

Residue Cys-11 is part of the active site.

Belongs to the peptidase C69 family.

The enzyme catalyses an L-aminoacyl-L-amino acid + H2O = 2 an L-alpha-amino acid. This Lactococcus lactis subsp. lactis (strain IL1403) (Streptococcus lactis) protein is Probable dipeptidase B (pepDB).